Consider the following 637-residue polypeptide: Chaperone protein DnaK (637 aa).

Threonine 198 is modified (phosphothreonine; by autocatalysis). Residues 597–637 (MYAKTSQAGAGPQPGAGPGTGGQGPGKKDEDVVDADFEEVK) are disordered. The span at 608-621 (PQPGAGPGTGGQGP) shows a compositional bias: gly residues. Acidic residues predominate over residues 627–637 (DVVDADFEEVK).

This sequence belongs to the heat shock protein 70 family.

Its function is as follows. Acts as a chaperone. The sequence is that of Chaperone protein DnaK from Syntrophus aciditrophicus (strain SB).